A 66-amino-acid polypeptide reads, in one-letter code: DNA-directed RNA polymerase subunit Rpo10 (66 aa).

4 residues coordinate Zn(2+): Cys7, Cys10, Cys44, and Cys45.

Belongs to the archaeal Rpo10/eukaryotic RPB10 RNA polymerase subunit family. Part of the RNA polymerase complex. The cofactor is Zn(2+).

The protein localises to the cytoplasm. It catalyses the reaction RNA(n) + a ribonucleoside 5'-triphosphate = RNA(n+1) + diphosphate. Functionally, DNA-dependent RNA polymerase (RNAP) catalyzes the transcription of DNA into RNA using the four ribonucleoside triphosphates as substrates. The sequence is that of DNA-directed RNA polymerase subunit Rpo10 from Staphylothermus marinus (strain ATCC 43588 / DSM 3639 / JCM 9404 / F1).